Here is a 210-residue protein sequence, read N- to C-terminus: MNPASPFATLTDRIDWQKVDGLVPAIVQDFQSSQVLMMGYMNPEALQKTLDTQQVTFFSRSKQRLWTKGETSGHVLQLKNIALDCDQDTLLVKVNPIGPTCHTGTVTCWDGDAQEESQMVWLHQLEQLLAERKNADPSSSYTASLYARGTKRIAQKVGEEGVEVALAATAGDKEELICESADLMYHLLVLLQEQGLAMNDVINKLKERHK.

The phosphoribosyl-AMP cyclohydrolase stretch occupies residues 1-121; sequence MNPASPFATL…DAQEESQMVW (121 aa). Positions 122 to 210 are phosphoribosyl-ATP pyrophosphohydrolase; the sequence is LHQLEQLLAE…VINKLKERHK (89 aa).

This sequence in the N-terminal section; belongs to the PRA-CH family. It in the C-terminal section; belongs to the PRA-PH family.

It is found in the cytoplasm. It catalyses the reaction 1-(5-phospho-beta-D-ribosyl)-ATP + H2O = 1-(5-phospho-beta-D-ribosyl)-5'-AMP + diphosphate + H(+). The catalysed reaction is 1-(5-phospho-beta-D-ribosyl)-5'-AMP + H2O = 1-(5-phospho-beta-D-ribosyl)-5-[(5-phospho-beta-D-ribosylamino)methylideneamino]imidazole-4-carboxamide. It functions in the pathway amino-acid biosynthesis; L-histidine biosynthesis; L-histidine from 5-phospho-alpha-D-ribose 1-diphosphate: step 2/9. Its pathway is amino-acid biosynthesis; L-histidine biosynthesis; L-histidine from 5-phospho-alpha-D-ribose 1-diphosphate: step 3/9. The sequence is that of Histidine biosynthesis bifunctional protein HisIE (hisI) from Vibrio cholerae serotype O1 (strain ATCC 39315 / El Tor Inaba N16961).